We begin with the raw amino-acid sequence, 425 residues long: Voltage-dependent calcium channel gamma-8 subunit (425 aa).

Transmembrane regions (helical) follow at residues 19–39 (VQVL…TIAI), 129–149 (SIFP…VAAS), 158–178 (IILG…IGVI), and 208–228 (FGGL…NIYI). Phosphoserine is present on residues serine 252 and serine 255. Residues 272–304 (RRSRSSSRSSEPSPSRDASPGGPGGPGFASTDI) form a disordered region. Over residues 277 to 287 (SSRSSEPSPSR) the composition is skewed to low complexity. A helical membrane pass occupies residues 318–338 (VAAGLAGAGGGGGGAVGAFGG). The span at 343-354 (AGGGGGGGGGAG) shows a compositional bias: gly residues. Disordered stretches follow at residues 343 to 365 (AGGG…ASGF) and 377 to 425 (GGGV…TTPV). A compositionally biased stretch (pro residues) spans 387-401 (PPAPPAPAPPAPSAP). Over residues 412–425 (ASNTNTLNRKTTPV) the composition is skewed to polar residues.

The protein belongs to the PMP-22/EMP/MP20 family. CACNG subfamily. Interacts with CACNA1C. Identified in a complex with the L-type calcium channel subunits CACNA1C, CACNA2D1 and either CACNB1 or CACNB2. Acts as an auxiliary subunit for AMPA-selective glutamate receptors (AMPARs). Found in a complex with GRIA1, GRIA2, GRIA3, GRIA4, CNIH2, CNIH3, CACNG2, CACNG3, CACNG4, CACNG5 and CACNG7. Interacts with CNIH2. Found in a complex with GRIA1, GRIA2, GRIA3, GRIA4, DLG4 and CNIH2. In terms of processing, palmitoylated. Probably palmitoylated by ZDHHC3 and ZDHHC7. In terms of tissue distribution, detected in heart left ventricle.

Its subcellular location is the cell membrane. It is found in the postsynaptic density membrane. Regulates the activity of L-type calcium channels that contain CACNA1C as pore-forming subunit. Regulates the trafficking and gating properties of AMPA-selective glutamate receptors (AMPARs). Promotes their targeting to the cell membrane and synapses and modulates their gating properties by slowing their rates of activation, deactivation and desensitization and by mediating their resensitization. Does not show subunit-specific AMPA receptor regulation and regulates all AMPAR subunits. The chain is Voltage-dependent calcium channel gamma-8 subunit from Homo sapiens (Human).